A 457-amino-acid chain; its full sequence is MGAPTFHIAMYPWFALGHLTPFLHLSNKLARKGHKISFLIPTKTQQKLEPFNLHPDLITFIPVTVPHVDGLPLGAETTSDVPYPLQTLLMTAMDRTEKYVEDVFLGLKVDVVFFDFTHWMPSVAKRLGIKSVNYCIISPATIGYTMSPARQLQGRELTEADLMVTPLGYPDSSIRLRTHEARAFAARRVMKFGGDTRFCDRNFISFSECDAMGFKTCREIEGPYCDFLESQFEKPVLLSGPVIPEPPTSPLEEIWAKWLGGFRDGSVIYCAFGSECTLKMNQFQELLLGLVLTGMPFLAVLKPPIGAKSVEEALPEKFETSVEGRGVVHEGWVQQQLILEHPSVGCFITHCGSGSLSEALFNKCQLVLLPNVGDQIINARMMSQNLKVGVEVEKGEEDGLFTGESVCRAVRDAMEEGSEVAKEVRDNHAKMREFLLNKDLESSYIDNFNKKLQDLLG.

Belongs to the UDP-glycosyltransferase family. Expressed in ovaries.

It carries out the reaction cyanidin 3-O-beta-D-galactoside + UDP-alpha-D-xylose = cyanidin 3-O-[beta-D-xylosyl-(1-&gt;2)-beta-D-galactoside] + UDP + H(+). The protein operates within pigment biosynthesis; anthocyanin biosynthesis. Its function is as follows. Xylosyltransferase involved in anthocyanin biosynthesis by catalyzing the xylosylation of cyanidin 3-O-galactoside to form cyanidin 3-O-[2-O-(-xylosyl)-galactoside]. Required for the accumulation of anthocyanin in red-fleshed kiwifruit varieties. This chain is Cyanidin 3-O-galactoside 2''-O-xylosyltransferase FGGT1, found in Actinidia chinensis var. chinensis (Chinese soft-hair kiwi).